The following is a 463-amino-acid chain: Chromosomal replication initiator protein DnaA (463 aa).

The tract at residues 1-83 (MSTNQIILTD…LQLFQHYNNT (83 aa)) is domain I, interacts with DnaA modulators. Residues 83–124 (TIKSIEIITKELPGTTQTVTELPTKTFADIGSSELNSENIFS) form a domain II region. The interval 125–343 (TLDVRFTFDN…GALNKVIAHS (219 aa)) is domain III, AAA+ region. ATP contacts are provided by Gly-171, Gly-173, Lys-174, and Thr-175. A domain IV, binds dsDNA region spans residues 344–463 (NFTLKEITLE…IHLLMKILQN (120 aa)).

This sequence belongs to the DnaA family. In terms of assembly, oligomerizes as a right-handed, spiral filament on DNA at oriC.

The protein resides in the cytoplasm. In terms of biological role, plays an essential role in the initiation and regulation of chromosomal replication. ATP-DnaA binds to the origin of replication (oriC) to initiate formation of the DNA replication initiation complex once per cell cycle. Binds the DnaA box (a 9 base pair repeat at the origin) and separates the double-stranded (ds)DNA. Forms a right-handed helical filament on oriC DNA; dsDNA binds to the exterior of the filament while single-stranded (ss)DNA is stabiized in the filament's interior. The ATP-DnaA-oriC complex binds and stabilizes one strand of the AT-rich DNA unwinding element (DUE), permitting loading of DNA polymerase. After initiation quickly degrades to an ADP-DnaA complex that is not apt for DNA replication. Binds acidic phospholipids. In Rickettsia africae (strain ESF-5), this protein is Chromosomal replication initiator protein DnaA.